A 471-amino-acid polypeptide reads, in one-letter code: Glutamate--tRNA ligase (471 aa).

The 'HIGH' region motif lies at 9–19 (PSPTGYLHVGG). The Zn(2+) site is built by Cys98, Cys100, Cys125, and Asp127. The 'KMSKS' region signature appears at 237–241 (KLSKR). An ATP-binding site is contributed by Lys240.

It belongs to the class-I aminoacyl-tRNA synthetase family. Glutamate--tRNA ligase type 1 subfamily. In terms of assembly, monomer. The cofactor is Zn(2+).

It localises to the cytoplasm. It catalyses the reaction tRNA(Glu) + L-glutamate + ATP = L-glutamyl-tRNA(Glu) + AMP + diphosphate. Functionally, catalyzes the attachment of glutamate to tRNA(Glu) in a two-step reaction: glutamate is first activated by ATP to form Glu-AMP and then transferred to the acceptor end of tRNA(Glu). This chain is Glutamate--tRNA ligase, found in Yersinia pseudotuberculosis serotype IB (strain PB1/+).